Reading from the N-terminus, the 20-residue chain is DVVASSTAHKQQDINHLLDK.

A disordered region spans residues 1-20 (DVVASSTAHKQQDINHLLDK). Basic and acidic residues predominate over residues 10 to 20 (KQQDINHLLDK).

It belongs to the tyrosinase family. Hemocyanin subfamily. As to quaternary structure, composed of 3 major subunits (IB, II and III) and 1 minor subunit (IA) which form homohexamers and heterohexamers. May also form larger structures. In terms of tissue distribution, hemolymph.

The protein resides in the secreted. It is found in the extracellular space. In terms of biological role, hemocyanins are copper-containing oxygen carriers occurring freely dissolved in the hemolymph of many mollusks and arthropods. The sequence is that of Hemocyanin subunit II from Panulirus japonicus (Japanese spiny lobster).